The chain runs to 222 residues: PKHD-type hydroxylase Syncc9902_2001 (222 aa).

Residues 80 to 174 (RVHSILISRS…RLVCVGWIES (95 aa)) enclose the Fe2OG dioxygenase domain. Fe cation-binding residues include histidine 98, aspartate 100, and histidine 155. Arginine 165 is a binding site for 2-oxoglutarate.

It depends on Fe(2+) as a cofactor. Requires L-ascorbate as cofactor.

This Synechococcus sp. (strain CC9902) protein is PKHD-type hydroxylase Syncc9902_2001.